The following is a 623-amino-acid chain: Set1/Ash2 histone methyltransferase complex subunit ASH2 (623 aa).

Gly residues predominate over residues 1 to 18 (MAAAGAGPGPGVSAGPGP). The PHD-type; atypical zinc-finger motif lies at 1–62 (MAAAGAGPGP…SGEAESGDAN (62 aa)). The disordered stretch occupies residues 1–99 (MAAAGAGPGP…MDTQAGSVDE (99 aa)). Residues 36-56 (AAGAGEGPSAAPGAEPSSGEA) show a composition bias toward low complexity. A DNA-binding region spans residues 63 to 172 (LVDVSGLETE…MCLSALANLT (110 aa)). Polar residues predominate over residues 84 to 95 (GDTSEVMDTQAG). Ser-96 carries the post-translational modification Phosphoserine. The C4-type zinc finger occupies 112 to 145 (CGICTKWFTADTFGIDTSSCLPFMTNYSFHCNVC). Basic and acidic residues predominate over residues 230–247 (LVKEHPDPGSKDPEEDYP). Residues 230–326 (LVKEHPDPGS…AQRLPPHGYP (97 aa)) are disordered. Residues 265 to 277 (NQKQSSAVSASGN) show a composition bias toward polar residues. Over residues 278–290 (LNGGIAAGSSGKG) the composition is skewed to gly residues. Arg-291 carries the post-translational modification Asymmetric dimethylarginine; by PRMT1 and PRMT5. Position 311 is a phosphoserine (Ser-311). The interaction with RBBP5 stretch occupies residues 311–623 (SDPLFSAQRL…DGRRSPPWEP (313 aa)). The region spanning 355-578 (LDCWAGKPIP…VSINFGPSFK (224 aa)) is the B30.2/SPRY domain.

Interacts with HCFC1. Core component of several methyltransferase-containing complexes including MLL1/MLL, MLL2/3 (also named ASCOM complex) and MLL4/WBP7. Each complex is at least composed of ASH2L, RBBP5, WDR5, DPY30, one or more specific histone methyltransferases (KMT2A/MLL1, KMT2D/MLL2, KMT2C/MLL3 and KMT2B/MLL4), and the facultative components PAGR1, BACC1, CHD8, E2F6, HCFC1, HCFC2, HSP70, INO80C, KDM6A, KANSL1, LAS1L, MAX, MCRS1, MEN1, MGA, KAT8/MOF, NCOA6, PAXIP1/PTIP, PELP1, PHF20, PRP31, RING2, RUVB1/TIP49A, RUVB2/TIP49B, SENP3, TAF1, TAF4, TAF6, TAF7, TAF9, TEX10 and alpha- and beta-tubulin. Component of the SET1 complex, at least composed of the catalytic subunit (SETD1A or SETD1B), WDR5, WDR82, RBBP5, ASH2L/ASH2, CXXC1/CFP1, HCFC1 and DPY30. Found in a complex with RBBP5, ASH2L, DPY30, KMT2A, KMT2D and WDR5. Component of a histone methylation complex composed of at least ZNF335, RBBP5, ASH2L and WDR5; the complex may have histone H3-specific methyltransferase activity, however does not have specificity for 'Lys-4' of histone H3. Within the complex, interacts with ZNF335. Interacts with RBBP5. Components of this complex may associate with components of a nuclear receptor-mediated transcription complex to form a complex at least composed of ZNF335, HCFC1, CCAR2, EMSY, MKI67, RBBP5, ASH2L and WDR5. Within this complex also interacts with CCAR2 and EMSY. Interacts with DPY30. Interacts with SETD1A and SETD1B. Post-translationally, both monomethylated and dimethylated on arginine residues in the C-terminus. Arg-291 is the major site. Methylation is not required for nuclear localization, nor for MLL complex integrity or maintenance of global histone H3K4me3 levels. As to expression, ubiquitously expressed, with abundant expression in the heart, skeletal muscle and kidney. Low expression is seen in spleen, lung and testis.

It localises to the nucleus. Transcriptional regulator. Component or associated component of some histone methyltransferase complexes which regulates transcription through recruitment of those complexes to gene promoters. Component of the Set1/Ash2 histone methyltransferase (HMT) complex, a complex that specifically methylates 'Lys-4' of histone H3, but not if the neighboring 'Lys-9' residue is already methylated. As part of the MLL1/MLL complex it is involved in methylation and dimethylation at 'Lys-4' of histone H3. May play a role in hematopoiesis. In association with RBBP5 and WDR5, stimulates the histone methyltransferase activities of KMT2A, KMT2B, KMT2C, KMT2D, SETD1A and SETD1B. The protein is Set1/Ash2 histone methyltransferase complex subunit ASH2 (Ash2l) of Mus musculus (Mouse).